Here is a 474-residue protein sequence, read N- to C-terminus: Putative pectinesterase/pectinesterase inhibitor 38 (474 aa).

Positions 1–130 (MVFGNEMCDE…HSLESITIDV (130 aa)) are pectinesterase inhibitor 38. The N-linked (GlcNAc...) asparagine glycan is linked to Asn-80. The tract at residues 164-461 (DVVVAQDGSG…TLPKFIDSAS (298 aa)) is pectinesterase 38. 2 residues coordinate substrate: Thr-241 and Gln-271. Asp-294 acts as the Proton donor; for pectinesterase activity in catalysis. An intrachain disulfide couples Cys-308 to Cys-328. The Nucleophile; for pectinesterase activity role is filled by Asp-315. A glycan (N-linked (GlcNAc...) asparagine) is linked at Asn-351. Substrate contacts are provided by Arg-380 and Trp-382. Asn-409 carries N-linked (GlcNAc...) asparagine glycosylation.

In the N-terminal section; belongs to the PMEI family. The protein in the C-terminal section; belongs to the pectinesterase family.

The protein localises to the secreted. Its subcellular location is the cell wall. It carries out the reaction [(1-&gt;4)-alpha-D-galacturonosyl methyl ester](n) + n H2O = [(1-&gt;4)-alpha-D-galacturonosyl](n) + n methanol + n H(+). It participates in glycan metabolism; pectin degradation; 2-dehydro-3-deoxy-D-gluconate from pectin: step 1/5. Functionally, acts in the modification of cell walls via demethylesterification of cell wall pectin. This Arabidopsis thaliana (Mouse-ear cress) protein is Putative pectinesterase/pectinesterase inhibitor 38 (PME38).